The primary structure comprises 1401 residues: DNA-directed RNA polymerase subunit beta' (1401 aa).

Zn(2+)-binding residues include Cys-70, Cys-72, Cys-85, and Cys-88. Asp-460, Asp-462, and Asp-464 together coordinate Mg(2+). The Zn(2+) site is built by Cys-808, Cys-882, Cys-889, and Cys-892.

Belongs to the RNA polymerase beta' chain family. In terms of assembly, the RNAP catalytic core consists of 2 alpha, 1 beta, 1 beta' and 1 omega subunit. When a sigma factor is associated with the core the holoenzyme is formed, which can initiate transcription. It depends on Mg(2+) as a cofactor. The cofactor is Zn(2+).

The enzyme catalyses RNA(n) + a ribonucleoside 5'-triphosphate = RNA(n+1) + diphosphate. In terms of biological role, DNA-dependent RNA polymerase catalyzes the transcription of DNA into RNA using the four ribonucleoside triphosphates as substrates. The sequence is that of DNA-directed RNA polymerase subunit beta' from Legionella pneumophila (strain Lens).